The sequence spans 322 residues: tRNA uridine(34) hydroxylase (322 aa).

The Rhodanese domain maps to 126-220 (LAEDTVVIDA…YGKDPEVKGE (95 aa)). The active-site Cysteine persulfide intermediate is cysteine 180.

The protein belongs to the TrhO family.

The enzyme catalyses uridine(34) in tRNA + AH2 + O2 = 5-hydroxyuridine(34) in tRNA + A + H2O. Catalyzes oxygen-dependent 5-hydroxyuridine (ho5U) modification at position 34 in tRNAs. The protein is tRNA uridine(34) hydroxylase of Shouchella clausii (strain KSM-K16) (Alkalihalobacillus clausii).